We begin with the raw amino-acid sequence, 239 residues long: Probable transcriptional regulatory protein ABO_1803 (239 aa).

The protein belongs to the TACO1 family.

The protein resides in the cytoplasm. This chain is Probable transcriptional regulatory protein ABO_1803, found in Alcanivorax borkumensis (strain ATCC 700651 / DSM 11573 / NCIMB 13689 / SK2).